A 569-amino-acid chain; its full sequence is Urease subunit alpha (569 aa).

In terms of domain architecture, Urease spans 131–569 (GSIDTHIHFI…VPMAQRYFLL (439 aa)). 3 residues coordinate Ni(2+): His136, His138, and Lys219. Lys219 bears the N6-carboxylysine mark. Substrate is bound at residue His221. Residues His248 and His274 each coordinate Ni(2+). His322 functions as the Proton donor in the catalytic mechanism. Residue Asp362 coordinates Ni(2+).

Belongs to the metallo-dependent hydrolases superfamily. Urease alpha subunit family. Heterotrimer of UreA (gamma), UreB (beta) and UreC (alpha) subunits. Three heterotrimers associate to form the active enzyme. Ni cation serves as cofactor. Post-translationally, carboxylation allows a single lysine to coordinate two nickel ions.

Its subcellular location is the cytoplasm. The enzyme catalyses urea + 2 H2O + H(+) = hydrogencarbonate + 2 NH4(+). It functions in the pathway nitrogen metabolism; urea degradation; CO(2) and NH(3) from urea (urease route): step 1/1. The sequence is that of Urease subunit alpha from Prochlorococcus marinus (strain MIT 9301).